The sequence spans 165 residues: Xanthine-guanine phosphoribosyltransferase (165 aa).

Residues 41 to 42 and 98 to 106 contribute to the 5-phospho-alpha-D-ribose 1-diphosphate site; these read RG and DDLTDTGKT. Aspartate 99 is a binding site for Mg(2+). Guanine-binding residues include aspartate 102 and isoleucine 145. Positions 102 and 145 each coordinate xanthine. GMP is bound by residues 102 to 106 and 144 to 145; these read DTGKT and WI.

It belongs to the purine/pyrimidine phosphoribosyltransferase family. XGPT subfamily. As to quaternary structure, homotetramer. Requires Mg(2+) as cofactor.

It is found in the cell inner membrane. The catalysed reaction is GMP + diphosphate = guanine + 5-phospho-alpha-D-ribose 1-diphosphate. The enzyme catalyses XMP + diphosphate = xanthine + 5-phospho-alpha-D-ribose 1-diphosphate. It catalyses the reaction IMP + diphosphate = hypoxanthine + 5-phospho-alpha-D-ribose 1-diphosphate. Its pathway is purine metabolism; GMP biosynthesis via salvage pathway; GMP from guanine: step 1/1. The protein operates within purine metabolism; XMP biosynthesis via salvage pathway; XMP from xanthine: step 1/1. In terms of biological role, purine salvage pathway enzyme that catalyzes the transfer of the ribosyl-5-phosphate group from 5-phospho-alpha-D-ribose 1-diphosphate (PRPP) to the N9 position of the 6-oxopurines guanine and xanthine to form the corresponding ribonucleotides GMP (guanosine 5'-monophosphate) and XMP (xanthosine 5'-monophosphate), with the release of PPi. To a lesser extent, also acts on hypoxanthine. In Agrobacterium fabrum (strain C58 / ATCC 33970) (Agrobacterium tumefaciens (strain C58)), this protein is Xanthine-guanine phosphoribosyltransferase.